A 159-amino-acid polypeptide reads, in one-letter code: Transcriptional repressor NrdR (159 aa).

A zinc finger lies at 3–34; that stretch reads CPTCQNTDSRVLESRSADTGKSVRRRRECLNC. Residues 49 to 139 enclose the ATP-cone domain; the sequence is ISVIKKDGSR…VYRKFNGVKD (91 aa).

Belongs to the NrdR family. Zn(2+) serves as cofactor.

In terms of biological role, negatively regulates transcription of bacterial ribonucleotide reductase nrd genes and operons by binding to NrdR-boxes. This chain is Transcriptional repressor NrdR, found in Prochlorococcus marinus subsp. pastoris (strain CCMP1986 / NIES-2087 / MED4).